The primary structure comprises 322 residues: Putative integrase ORF3 (322 aa).

The Integrase catalytic domain occupies 153 to 322 (RGKLTDFKSI…SSKEMFLQNI (170 aa)).

This sequence belongs to the plectrovirus integrase ORF3 family.

Its function is as follows. This protein may encode an integrase, which is necessary for integration of the viral DNA into host genome. The protein is Putative integrase ORF3 of Spiroplasma virus SpV1-R8A2 B (SpV1).